A 432-amino-acid polypeptide reads, in one-letter code: Adenosine 3'-phospho 5'-phosphosulfate transporter 1 (432 aa).

Transmembrane regions (helical) follow at residues W5–E25, V40–F60, A109–L129, F154–C174, W238–G258, P265–T285, S299–L319, L353–L373, and G387–L407. Position 427 is a phosphoserine (S427).

It belongs to the nucleotide-sugar transporter family. SLC35B subfamily. Highly expressed in the placenta, pancreas, mammary gland and skeletal muscle. Weakly or not expressed in colon, heart and prostate. Expressed in the brain, predominantly in frontal lobe gray matter, subcortical frontal white matter and cerebellum.

It localises to the golgi apparatus membrane. It catalyses the reaction 3'-phosphoadenylyl sulfate(in) + adenosine 3',5'-bisphosphate(out) = 3'-phosphoadenylyl sulfate(out) + adenosine 3',5'-bisphosphate(in). Its function is as follows. Probably functions as a 3'-phosphoadenylyl sulfate:adenosine 3',5'-bisphosphate antiporter at the Golgi membranes. Mediates the transport from the cytosol into the lumen of the Golgi of 3'-phosphoadenylyl sulfate/adenosine 3'-phospho 5'-phosphosulfate (PAPS), a universal sulfuryl donor for sulfation events that take place in that compartment. The polypeptide is Adenosine 3'-phospho 5'-phosphosulfate transporter 1 (Homo sapiens (Human)).